A 102-amino-acid chain; its full sequence is Small ribosomal subunit protein uS10 (102 aa).

It belongs to the universal ribosomal protein uS10 family. In terms of assembly, part of the 30S ribosomal subunit.

Involved in the binding of tRNA to the ribosomes. The protein is Small ribosomal subunit protein uS10 of Lactiplantibacillus plantarum (strain ATCC BAA-793 / NCIMB 8826 / WCFS1) (Lactobacillus plantarum).